Reading from the N-terminus, the 251-residue chain is Chromobox protein homolog 7 (251 aa).

The Chromo domain maps to 11 to 69 (FAVESIRKKRVRKGKVEYLVKWKGWPPKYSTWEPEEHILDPRLVMAYEEKEERDRASGY). Residues 190–220 (EPAAQPPEEEADADLAEGPPPWTPALPSSEV) are disordered. Residues 223 to 236 (TDITANSITVTFRE) form a required for cellular lifespan extension region.

Component of a PRC1-like complex. Interacts with RING1 and RNF2/RING1B, but not with BMI1, EED or EZH2. Interacts with PCGF1, PCGF2, PCGF3, PCGF5 and PCGF6.

It localises to the nucleus. Component of a Polycomb group (PcG) multiprotein PRC1-like complex, a complex class required to maintain the transcriptionally repressive state of many genes, including Hox genes, throughout development. PcG PRC1 complex acts via chromatin remodeling and modification of histones; it mediates monoubiquitination of histone H2A 'Lys-119', rendering chromatin heritably changed in its expressibility. Promotes histone H3 trimethylation at 'Lys-9' (H3K9me3). Binds to trimethylated lysine residues in histones, and possibly also other proteins. Regulator of cellular lifespan by maintaining the repression of CDKN2A, but not by inducing telomerase activity. The protein is Chromobox protein homolog 7 (CBX7) of Homo sapiens (Human).